We begin with the raw amino-acid sequence, 571 residues long: UvrABC system protein C (571 aa).

Positions 15–93 (TSPGVYLWKD…IDRYNPEFNI (79 aa)) constitute a GIY-YIG domain. Positions 184–219 (NNYINELTNKMHQAANNMQFELALFLRDGLTYLKKL) constitute a UVR domain.

This sequence belongs to the UvrC family. In terms of assembly, interacts with UvrB in an incision complex.

The protein resides in the cytoplasm. The UvrABC repair system catalyzes the recognition and processing of DNA lesions. UvrC both incises the 5' and 3' sides of the lesion. The N-terminal half is responsible for the 3' incision and the C-terminal half is responsible for the 5' incision. The sequence is that of UvrABC system protein C from Mycoplasmopsis bovis (strain ATCC 25523 / DSM 22781 / NCTC 10131 / PG45) (Mycoplasma bovis).